The chain runs to 670 residues: Leucine-rich repeat-containing protein 45 (670 aa).

5 LRR repeats span residues 87 to 108 (TVKSLDLKGNNLRTTGAEALGK), 115 to 136 (SIRSLILEWNSLGVWEEGFSFF), 145 to 166 (FLQRLDLRNNQINHHGAGELAM), 173 to 194 (SLQELDLRWNNIGLLGGRALLN), and 201 to 223 (TLKKLELAGNNVPSDILKAVEQA). A coiled-coil region spans residues 234 to 645 (LSETQNRTSV…ISRMKEEEAQ (412 aa)).

In terms of assembly, homomer.

It is found in the cytoplasm. The protein localises to the cytoskeleton. The protein resides in the microtubule organizing center. Its subcellular location is the centrosome. Its function is as follows. Component of the proteinaceous fiber-like linker between two centrioles, required for centrosome cohesion. In Gallus gallus (Chicken), this protein is Leucine-rich repeat-containing protein 45 (LRRC45).